The chain runs to 289 residues: Bis(5'-nucleosyl)-tetraphosphatase, symmetrical (289 aa).

It belongs to the Ap4A hydrolase family.

It carries out the reaction P(1),P(4)-bis(5'-adenosyl) tetraphosphate + H2O = 2 ADP + 2 H(+). Its function is as follows. Hydrolyzes diadenosine 5',5'''-P1,P4-tetraphosphate to yield ADP. This is Bis(5'-nucleosyl)-tetraphosphatase, symmetrical from Yersinia pseudotuberculosis serotype IB (strain PB1/+).